Here is an 87-residue protein sequence, read N- to C-terminus: MTKVFCKKYHQELDAIPFQPLPGELGKKIHNEISNKAWQAWLAHQTILINEYRLNLIETKAKEFLKEEMHKFLFEGKEEKPEQFSEI.

It belongs to the Fe(2+)-trafficking protein family.

Could be a mediator in iron transactions between iron acquisition and iron-requiring processes, such as synthesis and/or repair of Fe-S clusters in biosynthetic enzymes. This chain is Probable Fe(2+)-trafficking protein, found in Francisella tularensis subsp. mediasiatica (strain FSC147).